A 142-amino-acid chain; its full sequence is Large ribosomal subunit protein uL11 (142 aa).

It belongs to the universal ribosomal protein uL11 family. As to quaternary structure, part of the ribosomal stalk of the 50S ribosomal subunit. Interacts with L10 and the large rRNA to form the base of the stalk. L10 forms an elongated spine to which L12 dimers bind in a sequential fashion forming a multimeric L10(L12)X complex. One or more lysine residues are methylated.

Its function is as follows. Forms part of the ribosomal stalk which helps the ribosome interact with GTP-bound translation factors. In Proteus vulgaris, this protein is Large ribosomal subunit protein uL11.